The primary structure comprises 542 residues: Probable quinate permease (542 aa).

Residues Met-1–Tyr-22 are Cytoplasmic-facing. A helical transmembrane segment spans residues Leu-23–Gly-43. Residues Thr-44–Asn-66 are Extracellular-facing. Residues Leu-67 to Ala-87 form a helical membrane-spanning segment. Residues Tyr-88–Lys-97 are Cytoplasmic-facing. Residues Trp-98–Asp-118 form a helical membrane-spanning segment. At Gly-119–Arg-130 the chain is on the extracellular side. Residues Val-131–Met-151 traverse the membrane as a helical segment. Residues Ala-152–Arg-159 lie on the Cytoplasmic side of the membrane. The helical transmembrane segment at Leu-160–Tyr-180 threads the bilayer. Topologically, residues Gly-181 to Trp-193 are extracellular. A helical membrane pass occupies residues Ile-194–Leu-214. The Cytoplasmic portion of the chain corresponds to Lys-215 to Arg-285. Residues Leu-286 to Tyr-306 form a helical membrane-spanning segment. The Extracellular portion of the chain corresponds to Tyr-307–Phe-325. Residues Ser-326–Ile-346 form a helical membrane-spanning segment. Topologically, residues Asp-347–Arg-352 are cytoplasmic. The chain crosses the membrane as a helical span at residues Leu-353 to Ile-373. Topologically, residues Lys-374–Thr-387 are extracellular. The chain crosses the membrane as a helical span at residues Gly-388–Trp-408. Residues Asn-409 to Tyr-456 lie on the Cytoplasmic side of the membrane. The chain crosses the membrane as a helical span at residues Gly-457 to Leu-477. At Pro-478–Val-542 the chain is on the extracellular side. The segment at Ile-519–Val-542 is disordered. Over residues Gln-531–Val-542 the composition is skewed to basic and acidic residues.

It belongs to the major facilitator superfamily. Sugar transporter (TC 2.A.1.1) family. Interacts with creB. Post-translationally, ubiquitinated. Deubiquitinated by creB, probably to control its activity or amount.

The protein localises to the cell membrane. Integral membrane transporter that imports quinic acid to be catabolized as a carbon source. The protein is Probable quinate permease (qutD) of Neosartorya fischeri (strain ATCC 1020 / DSM 3700 / CBS 544.65 / FGSC A1164 / JCM 1740 / NRRL 181 / WB 181) (Aspergillus fischerianus).